Consider the following 275-residue polypeptide: Large ribosomal subunit protein uL2 (275 aa).

Disordered stretches follow at residues 36–55 (KQSKNAGRNNSGRITVRHQG) and 223–275 (VAMN…RHKR). Positions 39-48 (KNAGRNNSGR) are enriched in polar residues. Basic and acidic residues predominate over residues 229 to 239 (DHPHGGGEGRT).

The protein belongs to the universal ribosomal protein uL2 family. As to quaternary structure, part of the 50S ribosomal subunit. Forms a bridge to the 30S subunit in the 70S ribosome.

One of the primary rRNA binding proteins. Required for association of the 30S and 50S subunits to form the 70S ribosome, for tRNA binding and peptide bond formation. It has been suggested to have peptidyltransferase activity; this is somewhat controversial. Makes several contacts with the 16S rRNA in the 70S ribosome. The protein is Large ribosomal subunit protein uL2 of Aromatoleum aromaticum (strain DSM 19018 / LMG 30748 / EbN1) (Azoarcus sp. (strain EbN1)).